Reading from the N-terminus, the 527-residue chain is tRNA pseudouridine synthase Pus10 (527 aa).

Residues Cys-21 and Cys-24 each coordinate Zn(2+). The stretch at 42 to 87 (KELLNELQKFLEPEKPELILEAPNPPLKKIRLHEDGIDNLSEDGKE) forms a coiled coil. At Ser-82 the chain carries Phosphoserine. Cys-107 and Cys-110 together coordinate Zn(2+). The RNA binding forefinger loop stretch occupies residues 302-315 (TPWIIDGERKMESS). The Nucleophile role is filled by Asp-342. Positions 440–455 (QKTPLRVLHRRPLAVR) are RNA binding thumb loop.

Belongs to the pseudouridine synthase Pus10 family. In terms of assembly, interacts with components of the microprocessor complex DROSHA and DGCR8. In terms of processing, proteolytically cleaved during TRAIL-induced cell death. Cleaved, in vitro, either by caspase-3 (CASP3) or caspase-8 (CASP8).

Its subcellular location is the nucleus. The protein resides in the cytoplasm. The protein localises to the mitochondrion. The catalysed reaction is uridine(55) in tRNA = pseudouridine(55) in tRNA. The enzyme catalyses uridine(54) in tRNA = pseudouridine(54) in tRNA. Its function is as follows. Protein with different functions depending on its subcellular location: involved in miRNA processing in the nucleus and acts as a tRNA pseudouridylate synthase in the cytoplasm. In the cytoplasm, acts as a pseudouridylate synthase by catalyzing synthesis of pseudouridine(54) and pseudouridine(55) from uracil-54 and uracil-55, respectively, in the psi GC loop of a subset of tRNAs. tRNA pseudouridylate synthase activity is enhanced by the presence of 1-methyladenosine at position 53-61 of tRNAs. Does not show tRNA pseudouridylate synthase activity in the nucleus. In the nucleus, promotes primary microRNAs (pri-miRNAs) processing independently of its RNA pseudouridylate synthase activity. Binds pri-miRNAs. Modulator of TRAIL/TNFSF10-induced cell death via activation of procaspase-8 and BID cleavage. Required for the progression of the apoptotic signal through intrinsic mitochondrial cell death. This chain is tRNA pseudouridine synthase Pus10, found in Mus musculus (Mouse).